The primary structure comprises 282 residues: Acetylglutamate kinase (282 aa).

Substrate contacts are provided by residues 62 to 63, Arg-84, and Asn-178; that span reads GG.

It belongs to the acetylglutamate kinase family. ArgB subfamily.

The protein localises to the cytoplasm. It catalyses the reaction N-acetyl-L-glutamate + ATP = N-acetyl-L-glutamyl 5-phosphate + ADP. It participates in amino-acid biosynthesis; L-arginine biosynthesis; N(2)-acetyl-L-ornithine from L-glutamate: step 2/4. Catalyzes the ATP-dependent phosphorylation of N-acetyl-L-glutamate. The sequence is that of Acetylglutamate kinase from Thermotoga petrophila (strain ATCC BAA-488 / DSM 13995 / JCM 10881 / RKU-1).